The sequence spans 202 residues: ATP-dependent dethiobiotin synthetase BioD (202 aa).

ATP is bound at residue 12 to 17; that stretch reads GIGKTI. T16 contacts Mg(2+). K32 is a catalytic residue. S36 contributes to the substrate binding site. ATP contacts are provided by residues D43, 94 to 97, and 178 to 180; these read EGAG and PVV. Mg(2+) contacts are provided by D43 and E94.

It belongs to the dethiobiotin synthetase family. In terms of assembly, homodimer. Requires Mg(2+) as cofactor.

The protein localises to the cytoplasm. It carries out the reaction (7R,8S)-7,8-diammoniononanoate + CO2 + ATP = (4R,5S)-dethiobiotin + ADP + phosphate + 3 H(+). Its pathway is cofactor biosynthesis; biotin biosynthesis; biotin from 7,8-diaminononanoate: step 1/2. Its function is as follows. Catalyzes a mechanistically unusual reaction, the ATP-dependent insertion of CO2 between the N7 and N8 nitrogen atoms of 7,8-diaminopelargonic acid (DAPA, also called 7,8-diammoniononanoate) to form a ureido ring. The chain is ATP-dependent dethiobiotin synthetase BioD from Sphingopyxis alaskensis (strain DSM 13593 / LMG 18877 / RB2256) (Sphingomonas alaskensis).